The chain runs to 140 residues: Small ribosomal subunit protein uS19 (140 aa).

It belongs to the universal ribosomal protein uS19 family.

Its function is as follows. Protein S19 forms a complex with S13 that binds strongly to the 16S ribosomal RNA. In Saccharolobus solfataricus (strain ATCC 35092 / DSM 1617 / JCM 11322 / P2) (Sulfolobus solfataricus), this protein is Small ribosomal subunit protein uS19 (rps19).